Here is a 354-residue protein sequence, read N- to C-terminus: Uroporphyrinogen decarboxylase (354 aa).

Substrate is bound by residues 25 to 29, D75, Y152, T207, and H330; that span reads RQAGR.

Belongs to the uroporphyrinogen decarboxylase family. As to quaternary structure, homodimer.

Its subcellular location is the cytoplasm. It catalyses the reaction uroporphyrinogen III + 4 H(+) = coproporphyrinogen III + 4 CO2. It functions in the pathway porphyrin-containing compound metabolism; protoporphyrin-IX biosynthesis; coproporphyrinogen-III from 5-aminolevulinate: step 4/4. Catalyzes the decarboxylation of four acetate groups of uroporphyrinogen-III to yield coproporphyrinogen-III. The protein is Uroporphyrinogen decarboxylase of Xanthomonas oryzae pv. oryzae (strain PXO99A).